Reading from the N-terminus, the 949-residue chain is Protein translocase subunit SecA (949 aa).

ATP is bound by residues Gln87, Gly105–Thr109, and Asp524. Disordered regions lie at residues Pro852–Gly876 and Leu896–Lys939. Zn(2+) is bound by residues Cys933, Cys935, Cys944, and His945.

This sequence belongs to the SecA family. Monomer and homodimer. Part of the essential Sec protein translocation apparatus which comprises SecA, SecYEG and auxiliary proteins SecDF-YajC and YidC. Requires Zn(2+) as cofactor.

It localises to the cell inner membrane. It is found in the cytoplasm. It carries out the reaction ATP + H2O + cellular proteinSide 1 = ADP + phosphate + cellular proteinSide 2.. Functionally, part of the Sec protein translocase complex. Interacts with the SecYEG preprotein conducting channel. Has a central role in coupling the hydrolysis of ATP to the transfer of proteins into and across the cell membrane, serving both as a receptor for the preprotein-SecB complex and as an ATP-driven molecular motor driving the stepwise translocation of polypeptide chains across the membrane. The sequence is that of Protein translocase subunit SecA from Methylocella silvestris (strain DSM 15510 / CIP 108128 / LMG 27833 / NCIMB 13906 / BL2).